We begin with the raw amino-acid sequence, 302 residues long: Small ribosomal subunit protein uS2 (302 aa).

The segment at 275 to 302 (EGEGESEAEPVVAKKKPVRAKRPAVKAE) is disordered. A compositionally biased stretch (basic residues) spans 287–302 (AKKKPVRAKRPAVKAE).

This sequence belongs to the universal ribosomal protein uS2 family.

The sequence is that of Small ribosomal subunit protein uS2 from Opitutus terrae (strain DSM 11246 / JCM 15787 / PB90-1).